The primary structure comprises 112 residues: Protein lin-52 homolog (112 aa).

Belongs to the lin-52 family. In terms of assembly, component of the DREAM complex.

This is Protein lin-52 homolog (lin52) from Danio rerio (Zebrafish).